We begin with the raw amino-acid sequence, 314 residues long: Acetyl-coenzyme A carboxylase carboxyl transferase subunit beta (314 aa).

Residues 44–311 (LMNKCPHCGT…VETWQASSPL (268 aa)) form the CoA carboxyltransferase N-terminal domain. Zn(2+) is bound by residues Cys48, Cys51, Cys67, and Cys70. The C4-type zinc finger occupies 48 to 70 (CPHCGTIHYSKDLEKNLRVCKGC).

Belongs to the AccD/PCCB family. As to quaternary structure, acetyl-CoA carboxylase is a heterohexamer composed of biotin carboxyl carrier protein (AccB), biotin carboxylase (AccC) and two subunits each of ACCase subunit alpha (AccA) and ACCase subunit beta (AccD). Zn(2+) serves as cofactor.

The protein resides in the cytoplasm. It catalyses the reaction N(6)-carboxybiotinyl-L-lysyl-[protein] + acetyl-CoA = N(6)-biotinyl-L-lysyl-[protein] + malonyl-CoA. The protein operates within lipid metabolism; malonyl-CoA biosynthesis; malonyl-CoA from acetyl-CoA: step 1/1. Component of the acetyl coenzyme A carboxylase (ACC) complex. Biotin carboxylase (BC) catalyzes the carboxylation of biotin on its carrier protein (BCCP) and then the CO(2) group is transferred by the transcarboxylase to acetyl-CoA to form malonyl-CoA. The chain is Acetyl-coenzyme A carboxylase carboxyl transferase subunit beta from Brevibacillus brevis (strain 47 / JCM 6285 / NBRC 100599).